Reading from the N-terminus, the 697-residue chain is Testis-specific gene 10 protein (697 aa).

The interval 556–688 is interaction with HIF1A; sequence QMTNERISMQ…SPDRGLDRSL (133 aa). Residues 656 to 684 are disordered; the sequence is NAYNLGPMKPNTKCHSPERAHHRSPDRGL. Over residues 670–684 the composition is skewed to basic and acidic residues; sequence HSPERAHHRSPDRGL. Ser687 carries the post-translational modification Phosphoserine.

This sequence belongs to the CEP135/TSGA10 family. Interacts with HIF1A. Processed into N-terminal 27-kDa and C-terminal 55-kDa fragments. As to expression, predominantly expressed in testis, in spermatozoa (at protein level). Not detected in Leydig cells. The N-terminal 27-kDa fragment is also detected in liver, while the C-terminal 55-kDa fragment is also found retina, brain and kidney (at protein level).

Its subcellular location is the cytoplasm. It localises to the cytoskeleton. It is found in the microtubule organizing center. The protein resides in the centrosome. The protein localises to the centriole. In terms of biological role, plays a role in spermatogenesis. When overexpressed, prevents nuclear localization of HIF1A. This chain is Testis-specific gene 10 protein (Tsga10), found in Mus musculus (Mouse).